The following is a 142-amino-acid chain: Group IIE secretory phospholipase A2 (142 aa).

An N-terminal signal peptide occupies residues 1–19 (MKPPIALACLCLLVPLAGG). Positions 41, 43, 45, 47, and 49 each coordinate Ca(2+). 7 disulfides stabilise this stretch: C44–C135, C46–C62, C61–C115, C67–C142, C68–C108, C77–C101, and C95–C106. H65 is a catalytic residue. Residue D66 coordinates Ca(2+). The active site involves D109. Residues Y130 and N132 each contribute to the Ca(2+) site.

It belongs to the phospholipase A2 family. Requires Ca(2+) as cofactor. Highly expressed in skin and uterus, and at lower levels in various other tissues. Expressed in hair follicles, specifically localized in companion cells of the outer root sheath and cuticular cells of the inner root sheath in hair follicles during anagen. Expressed in white and brown adipose tissue.

Its subcellular location is the secreted. The protein resides in the cytoplasm. The catalysed reaction is a 1,2-diacyl-sn-glycero-3-phosphoethanolamine + H2O = a 1-acyl-sn-glycero-3-phosphoethanolamine + a fatty acid + H(+). The enzyme catalyses 1-hexadecanoyl-2-(9Z-octadecenoyl)-sn-glycero-3-phosphoethanolamine + H2O = 1-hexadecanoyl-sn-glycero-3-phosphoethanolamine + (9Z)-octadecenoate + H(+). It carries out the reaction 1-hexadecanoyl-2-(9Z,12Z-octadecadienoyl)-sn-glycero-3-phosphoethanolamine + H2O = 1-hexadecanoyl-sn-glycero-3-phosphoethanolamine + (9Z,12Z)-octadecadienoate + H(+). It catalyses the reaction 1-hexadecanoyl-2-(5Z,8Z,11Z,14Z-eicosatetraenoyl)-sn-glycero-3-phosphoethanolamine + H2O = 1-hexadecanoyl-sn-glycero-3-phosphoethanolamine + (5Z,8Z,11Z,14Z)-eicosatetraenoate + H(+). The catalysed reaction is 1,2-dihexadecanoyl-sn-glycero-3-phospho-(1'-sn-glycerol) + H2O = 1-hexadecanoyl-sn-glycero-3-phospho-(1'-sn-glycerol) + hexadecanoate + H(+). The enzyme catalyses 1-hexadecanoyl-2-(9Z-octadecenoyl)-sn-glycero-3-phosphoglycerol + H2O = 1-hexadecanoyl-sn-glycero-3-phosphoglycerol + (9Z)-octadecenoate + H(+). It carries out the reaction a 1,2-diacyl-sn-glycero-3-phosphocholine + H2O = a 1-acyl-sn-glycero-3-phosphocholine + a fatty acid + H(+). It catalyses the reaction 1,2-dihexadecanoyl-sn-glycero-3-phosphocholine + H2O = 1-hexadecanoyl-sn-glycero-3-phosphocholine + hexadecanoate + H(+). The catalysed reaction is 1-hexadecanoyl-2-(9Z-octadecenoyl)-sn-glycero-3-phosphocholine + H2O = 1-hexadecanoyl-sn-glycero-3-phosphocholine + (9Z)-octadecenoate + H(+). The enzyme catalyses 1-hexadecanoyl-2-(9Z,12Z-octadecadienoyl)-sn-glycero-3-phosphocholine + H2O = (9Z,12Z)-octadecadienoate + 1-hexadecanoyl-sn-glycero-3-phosphocholine + H(+). It carries out the reaction 1-hexadecanoyl-2-(4Z,7Z,10Z,13Z,16Z,19Z-docosahexaenoyl)-sn-glycero-3-phosphocholine + H2O = (4Z,7Z,10Z,13Z,16Z,19Z)-docosahexaenoate + 1-hexadecanoyl-sn-glycero-3-phosphocholine + H(+). In terms of biological role, secretory calcium-dependent phospholipase A2 that primarily targets extracellular phospholipids. Hydrolyzes the ester bond of the fatty acyl group attached at sn-2 position of phospholipids (phospholipase A2 activity), releasing various unsaturated fatty acids including oleoate, linoleoate, arachidonate, docosahexaenoate and lysophosphatidylethanolamines in preference to lysophosphatidylcholines. In response to high-fat diet, hydrolyzes minor lipoprotein phospholipids including phosphatidylserines, phosphatidylinositols and phosphatidylglycerols, altering lipoprotein composition and fat storage in adipose tissue and liver. May act in an autocrine and paracrine manner. Contributes to lipid remodeling of cellular membranes and generation of lipid mediators involved in pathogen clearance. Cleaves sn-2 fatty acyl chains of phosphatidylglycerols and phosphatidylethanolamines, which are major components of membrane phospholipids in bacteria. Acts as a hair follicle phospholipase A2. Selectively releases lysophosphatidylethanolamines (LPE) and various unsaturated fatty acids in skin to regulate hair follicle homeostasis. May regulate the inflammatory response by releasing arachidonate, a precursor of prostaglandins and leukotrienes. Upon allergen exposure, may participate in allergic inflammatory response by enhancing leukotriene C4 synthesis and degranulation in mast cells. The polypeptide is Group IIE secretory phospholipase A2 (Pla2g2e) (Mus musculus (Mouse)).